We begin with the raw amino-acid sequence, 330 residues long: 7,8-didemethyl-8-hydroxy-5-deazariboflavin synthase (330 aa).

The Radical SAM core domain maps to 5-245 (VTFSRNVFIP…SDVAVQVAPN (241 aa)). Residues cysteine 19, cysteine 23, and cysteine 26 each contribute to the [4Fe-4S] cluster site.

It belongs to the radical SAM superfamily. CofG family. Consists of two subunits, CofG and CofH. [4Fe-4S] cluster is required as a cofactor.

The catalysed reaction is 5-amino-5-(4-hydroxybenzyl)-6-(D-ribitylimino)-5,6-dihydrouracil + S-adenosyl-L-methionine = 7,8-didemethyl-8-hydroxy-5-deazariboflavin + 5'-deoxyadenosine + L-methionine + NH4(+) + H(+). The protein operates within cofactor biosynthesis; coenzyme F0 biosynthesis. Its function is as follows. Catalyzes the radical-mediated synthesis of 7,8-didemethyl-8-hydroxy-5-deazariboflavin from 5-amino-5-(4-hydroxybenzyl)-6-(D-ribitylimino)-5,6-dihydrouracil. The chain is 7,8-didemethyl-8-hydroxy-5-deazariboflavin synthase from Methanococcoides burtonii (strain DSM 6242 / NBRC 107633 / OCM 468 / ACE-M).